A 215-amino-acid polypeptide reads, in one-letter code: Octanoyltransferase (215 aa).

One can recognise a BPL/LPL catalytic domain in the interval 31–206 (PDSQDEIWLV…QLVKHLDYAE (176 aa)). Substrate is bound by residues 70-77 (RGGQVTYH), 137-139 (SLG), and 150-152 (GLA). Catalysis depends on C168, which acts as the Acyl-thioester intermediate.

This sequence belongs to the LipB family.

It is found in the cytoplasm. It catalyses the reaction octanoyl-[ACP] + L-lysyl-[protein] = N(6)-octanoyl-L-lysyl-[protein] + holo-[ACP] + H(+). Its pathway is protein modification; protein lipoylation via endogenous pathway; protein N(6)-(lipoyl)lysine from octanoyl-[acyl-carrier-protein]: step 1/2. Functionally, catalyzes the transfer of endogenously produced octanoic acid from octanoyl-acyl-carrier-protein onto the lipoyl domains of lipoate-dependent enzymes. Lipoyl-ACP can also act as a substrate although octanoyl-ACP is likely to be the physiological substrate. The sequence is that of Octanoyltransferase from Pseudomonas putida (strain ATCC 700007 / DSM 6899 / JCM 31910 / BCRC 17059 / LMG 24140 / F1).